A 154-amino-acid polypeptide reads, in one-letter code: MYRMQLLSCIALSLALVTNSAPTSSSTKKTQLQLEHLLLDLQMILNGINNYKNPKLTRMLTFKFYMPKKATELKHLQCLEEELRPLEEVLNLAQSKNFHLRDTKDLISNINVIVLELKGSETTLMCEYADETATIVEFLNRWITFCQSIISTLT.

A signal peptide spans 1–20; it reads MYRMQLLSCIALSLALVTNS. A glycan (O-linked (GalNAc...) threonine) is linked at T23. C78 and C126 are joined by a disulfide.

Belongs to the IL-2 family.

It localises to the secreted. Cytokine produced by activated CD4-positive helper T-cells and to a lesser extend activated CD8-positive T-cells and natural killer (NK) cells that plays pivotal roles in the immune response and tolerance. Binds to a receptor complex composed of either the high-affinity trimeric IL-2R (IL2RA/CD25, IL2RB/CD122 and IL2RG/CD132) or the low-affinity dimeric IL-2R (IL2RB and IL2RG). Interaction with the receptor leads to oligomerization and conformation changes in the IL-2R subunits resulting in downstream signaling starting with phosphorylation of JAK1 and JAK3. In turn, JAK1 and JAK3 phosphorylate the receptor to form a docking site leading to the phosphorylation of several substrates including STAT5. This process leads to activation of several pathways including STAT, phosphoinositide-3-kinase/PI3K and mitogen-activated protein kinase/MAPK pathways. Functions as a T-cell growth factor and can increase NK-cell cytolytic activity as well. Promotes strong proliferation of activated B-cells and subsequently immunoglobulin production. Plays a pivotal role in regulating the adaptive immune system by controlling the survival and proliferation of regulatory T-cells, which are required for the maintenance of immune tolerance. Moreover, participates in the differentiation and homeostasis of effector T-cell subsets, including Th1, Th2, Th17 as well as memory CD8-positive T-cells. This chain is Interleukin-2 (IL2), found in Papio anubis (Olive baboon).